We begin with the raw amino-acid sequence, 274 residues long: Shikimate dehydrogenase (NADP(+)) (274 aa).

Residues 14-16 and T61 contribute to the shikimate site; that span reads SLS. The Proton acceptor role is filled by K65. Shikimate contacts are provided by N85 and D106. NADP(+) is bound by residues 130-134, 153-158, and A217; these read GAGGA and NRTAER. Position 219 (Y219) interacts with shikimate. Residue G240 participates in NADP(+) binding.

Belongs to the shikimate dehydrogenase family. Homodimer.

It catalyses the reaction shikimate + NADP(+) = 3-dehydroshikimate + NADPH + H(+). The protein operates within metabolic intermediate biosynthesis; chorismate biosynthesis; chorismate from D-erythrose 4-phosphate and phosphoenolpyruvate: step 4/7. In terms of biological role, involved in the biosynthesis of the chorismate, which leads to the biosynthesis of aromatic amino acids. Catalyzes the reversible NADPH linked reduction of 3-dehydroshikimate (DHSA) to yield shikimate (SA). The polypeptide is Shikimate dehydrogenase (NADP(+)) (Halorubrum lacusprofundi (strain ATCC 49239 / DSM 5036 / JCM 8891 / ACAM 34)).